The chain runs to 340 residues: 4-hydroxy-2-oxovalerate aldolase (340 aa).

Positions 4–255 (VVIHDPTLRD…ATGIDLYALL (252 aa)) constitute a Pyruvate carboxyltransferase domain. 12–13 (RD) is a substrate binding site. Asp-13 serves as a coordination point for Mn(2+). His-16 (proton acceptor) is an active-site residue. Substrate contacts are provided by Ser-166 and His-194. 2 residues coordinate Mn(2+): His-194 and His-196.

Belongs to the 4-hydroxy-2-oxovalerate aldolase family.

The catalysed reaction is (S)-4-hydroxy-2-oxopentanoate = acetaldehyde + pyruvate. The sequence is that of 4-hydroxy-2-oxovalerate aldolase from Streptomyces griseus subsp. griseus (strain JCM 4626 / CBS 651.72 / NBRC 13350 / KCC S-0626 / ISP 5235).